The primary structure comprises 173 residues: Alpha-crystallin A chain (173 aa).

Met-1 carries the N-acetylmethionine modification. In terms of domain architecture, sHSP spans 52-162 (LFRGFMDSGI…SHSERPIPVS (111 aa)). Zn(2+) is bound by residues His-100, Glu-102, His-107, and His-154. A disordered region spans residues 146-173 (MMSGLDSSHSERPIPVSREEKPTSAPSS). Residues 153 to 167 (SHSERPIPVSREEKP) are compositionally biased toward basic and acidic residues.

It belongs to the small heat shock protein (HSP20) family. In terms of assembly, heteropolymer composed of three CRYAA and one CRYAB subunits. Inter-subunit bridging via zinc ions enhances stability, which is crucial as there is no protein turn over in the lens. Can also form homodimers and homotetramers (dimers of dimers) which serve as the building blocks of homooligomers. Within homooligomers, the zinc-binding motif is created from residues of 3 different molecules. His-100 and Glu-102 from one molecule are ligands of the zinc ion, and His-107 and His-154 residues from additional molecules complete the site with tetrahedral coordination geometry.

Its subcellular location is the cytoplasm. It is found in the nucleus. Functionally, contributes to the transparency and refractive index of the lens. May act as a chaperone, preventing aggregation of various proteins under a wide range of stress conditions. The chain is Alpha-crystallin A chain (CRYAA) from Aquarana catesbeiana (American bullfrog).